The chain runs to 636 residues: Probable potassium transport system protein Kup (636 aa).

12 consecutive transmembrane segments (helical) span residues 23 to 43, 63 to 83, 114 to 134, 150 to 170, 182 to 202, 217 to 237, 260 to 280, 298 to 318, 350 to 370, 379 to 399, 407 to 427, and 432 to 452; these read LVIGAIGVVFGDIGTSPLYSL, IISLLFWAMTIVVSIKYVVFV, VLMMLGIFGACMFYGDAVITP, PQLSRFVIPITLVILVALFLI, FGPVMVVWFVTLGLLGLYNLV, ISFLIAHSLQAFIVLGSVFLV, WFVLVMPCLILNYFGQGAMLL, LLIPMVVLATCATVIASQAVI, IYLPVINWILLVLVVAVVISF, AYGIAVTTTMVITTFLAAVVM, PALVTLLGLSFLLVDLAFFAA, and VAEGGWFPLLLGSTAFFLLMT.

The protein belongs to the HAK/KUP transporter (TC 2.A.72) family.

Its subcellular location is the cell inner membrane. The enzyme catalyses K(+)(in) + H(+)(in) = K(+)(out) + H(+)(out). In terms of biological role, transport of potassium into the cell. Likely operates as a K(+):H(+) symporter. This chain is Probable potassium transport system protein Kup, found in Cupriavidus pinatubonensis (strain JMP 134 / LMG 1197) (Cupriavidus necator (strain JMP 134)).